Here is a 122-residue protein sequence, read N- to C-terminus: MIQQETRLKVADNSGAREILTIKVLGGSGRKFANIGDVIVASVKQATPGGAVKKGDVVKAVIVRTKSGARRPDGSYIKFDDNAAVIIRDDKTPRGTRIFGPVARELREGGYMKIVSLAPEVL.

It belongs to the universal ribosomal protein uL14 family. As to quaternary structure, part of the 50S ribosomal subunit. Forms a cluster with proteins L3 and L19. In the 70S ribosome, L14 and L19 interact and together make contacts with the 16S rRNA in bridges B5 and B8.

In terms of biological role, binds to 23S rRNA. Forms part of two intersubunit bridges in the 70S ribosome. This is Large ribosomal subunit protein uL14 from Streptococcus equi subsp. equi (strain 4047).